Consider the following 196-residue polypeptide: Pro-FMRFamide-related neuropeptide VF (196 aa).

A signal peptide spans 1–21; that stretch reads MEIISLKRFILLMLATSSLLT. A propeptide spanning residues 22 to 57 is cleaved from the precursor; sequence SNIFCTDESRIPSLYSKKNYDKYSEPRGDLGWEKER. Position 92 is a phenylalanine amide (F92). 2 propeptides span residues 95–99 and 115–121; these read NMEEE and NREDSLS. Phenylalanine amide is present on F131. Residues 134 to 196 constitute a propeptide that is removed on maturation; sequence TIAAKSITKT…IDDAELKQEK (63 aa).

The protein belongs to the FARP (FMRFamide related peptide) family. Expressed in hypothalamus, where it is localized to the dorsomedial hypothalamic nucleus (DMH), paraventricular nucleus (PVN), and to neuronal projections from the PVN to the neurosecretory zone of the median eminence.

The protein localises to the secreted. Its function is as follows. May act in concert with kisspeptin, through opposing affects, to regulate the activity of gonadotropin-releasing hormone (GnRH) neurons across the seasons, leading to an annual change in fertility and the cyclical seasonal transition from non-breeding to breeding season. In terms of biological role, efficiently inhibits forskolin-induced production of cAMP. Acts as a potent negative regulator of gonadotropin synthesis and secretion. Induces secretion of prolactin. Functionally, efficiently inhibits forskolin-induced production of cAMP. Blocks morphine-induced analgesia. Shows no inhibitory activity of forskolin-induced production of cAMP. The chain is Pro-FMRFamide-related neuropeptide VF from Ovis aries (Sheep).